A 308-amino-acid chain; its full sequence is tRNA pseudouridine synthase B (308 aa).

Asp-51 functions as the Nucleophile in the catalytic mechanism.

Belongs to the pseudouridine synthase TruB family. Type 1 subfamily.

It carries out the reaction uridine(55) in tRNA = pseudouridine(55) in tRNA. Its function is as follows. Responsible for synthesis of pseudouridine from uracil-55 in the psi GC loop of transfer RNAs. This chain is tRNA pseudouridine synthase B, found in Aromatoleum aromaticum (strain DSM 19018 / LMG 30748 / EbN1) (Azoarcus sp. (strain EbN1)).